The chain runs to 85 residues: uncharacterized protein (85 aa).

Disordered regions lie at residues M1–A28 and S35–E54. Residues S35 to K48 are compositionally biased toward basic residues.

It is found in the nucleus. This is an uncharacterized protein from Saccharomyces cerevisiae (strain ATCC 204508 / S288c) (Baker's yeast).